A 915-amino-acid chain; its full sequence is Protein inturned (915 aa).

The disordered stretch occupies residues 88–144 (NAKRQANSSNKSEAKLKKLTKILRRKRRPSQRKAEGKDSSQRPASILKNQAGQRPGV). Residues 104 to 118 (KKLTKILRRKRRPSQ) are compositionally biased toward basic residues. Residues 128 to 139 (QRPASILKNQAG) show a composition bias toward polar residues. Positions 165–253 (SVSSSSADRG…PMQVRLTLET (89 aa)) constitute a PDZ domain. The segment at 688–738 (GIRGRRASPQRSQSDSGSEGHADGTPASVARRDSLGSGGSDGSLGSAGFLK) is disordered.

This sequence belongs to the inturned family.

The protein localises to the cytoplasm. It localises to the cell surface. Its subcellular location is the cytoskeleton. The protein resides in the cilium basal body. Its function is as follows. Plays a key role in ciliogenesis and embryonic development. Regulator of cilia formation by controlling the organization of the apical actin cytoskeleton and the positioning of the basal bodies at the apical cell surface, which in turn is essential for the normal orientation of elongating ciliary microtubules. Plays a key role in definition of cell polarity via its role in ciliogenesis but not via conversion extension. Has an indirect effect on hedgehog signaling. This Danio rerio (Zebrafish) protein is Protein inturned (intu).